Consider the following 317-residue polypeptide: Methionyl-tRNA formyltransferase (317 aa).

112-115 lines the (6S)-5,6,7,8-tetrahydrofolate pocket; it reads SLLP.

It belongs to the Fmt family.

It catalyses the reaction L-methionyl-tRNA(fMet) + (6R)-10-formyltetrahydrofolate = N-formyl-L-methionyl-tRNA(fMet) + (6S)-5,6,7,8-tetrahydrofolate + H(+). In terms of biological role, attaches a formyl group to the free amino group of methionyl-tRNA(fMet). The formyl group appears to play a dual role in the initiator identity of N-formylmethionyl-tRNA by promoting its recognition by IF2 and preventing the misappropriation of this tRNA by the elongation apparatus. The polypeptide is Methionyl-tRNA formyltransferase (Geobacter sulfurreducens (strain ATCC 51573 / DSM 12127 / PCA)).